A 334-amino-acid polypeptide reads, in one-letter code: Ribosomal RNA small subunit methyltransferase H (334 aa).

S-adenosyl-L-methionine-binding positions include 53–55 (GGH), aspartate 72, phenylalanine 99, aspartate 122, and histidine 129.

It belongs to the methyltransferase superfamily. RsmH family.

It localises to the cytoplasm. The catalysed reaction is cytidine(1402) in 16S rRNA + S-adenosyl-L-methionine = N(4)-methylcytidine(1402) in 16S rRNA + S-adenosyl-L-homocysteine + H(+). In terms of biological role, specifically methylates the N4 position of cytidine in position 1402 (C1402) of 16S rRNA. This Leptospira interrogans serogroup Icterohaemorrhagiae serovar copenhageni (strain Fiocruz L1-130) protein is Ribosomal RNA small subunit methyltransferase H.